Here is a 400-residue protein sequence, read N- to C-terminus: NADH-quinone oxidoreductase subunit D (400 aa).

The protein belongs to the complex I 49 kDa subunit family. In terms of assembly, NDH-1 is composed of 14 different subunits. Subunits NuoB, C, D, E, F, and G constitute the peripheral sector of the complex.

Its subcellular location is the cell inner membrane. The enzyme catalyses a quinone + NADH + 5 H(+)(in) = a quinol + NAD(+) + 4 H(+)(out). NDH-1 shuttles electrons from NADH, via FMN and iron-sulfur (Fe-S) centers, to quinones in the respiratory chain. The immediate electron acceptor for the enzyme in this species is believed to be a menaquinone. Couples the redox reaction to proton translocation (for every two electrons transferred, four hydrogen ions are translocated across the cytoplasmic membrane), and thus conserves the redox energy in a proton gradient. This is NADH-quinone oxidoreductase subunit D from Pelodictyon phaeoclathratiforme (strain DSM 5477 / BU-1).